The primary structure comprises 147 residues: Large ribosomal subunit protein uL13 (147 aa).

It belongs to the universal ribosomal protein uL13 family. Part of the 50S ribosomal subunit.

Functionally, this protein is one of the early assembly proteins of the 50S ribosomal subunit, although it is not seen to bind rRNA by itself. It is important during the early stages of 50S assembly. The sequence is that of Large ribosomal subunit protein uL13 from Corynebacterium diphtheriae (strain ATCC 700971 / NCTC 13129 / Biotype gravis).